Here is a 518-residue protein sequence, read N- to C-terminus: MIPDVSQALAWLEKHPQALKGIQRGLERETLRVNADGTLATTVHPEALGSALTHKWITTDFAEALLEFITPVDGDIQHMLTFMRDLHRYTARKLGDERMWPLSMPCYIAEGQDIELAQYGTSNTGRFKTLYREGLKNRYGALMQTISGVHYNFSLPMAFWQAKCGVTEGEAAKEKISAGYFRLIRNYYRFGWVIPYLFGASPAICSSFLQGKPTTLPFEKTDCGMYYLPYATSLRLSDLGYTNKSQSNLGITFNDLHEYVAGLKRAIKTPSEEYARIGVEKDGKRLQINSNVLQIENELYAPIRPKRVTRSGESPSDALLRGGIEYIEVRSLDINPFSPIGVDEQQVRFLDLFMVWCVLADAPEMSSDELLCTRTNWNRVILEGRKPGLTLGIGCETAQFPLPKVGKDLFRDLKRVAQTLDSIHGGEEYQKVCDELVACFDNPELTFSARILRSMIDEGIGGTGKAFGEAYRNLLREEPLEILQEEEFIAERDASVRRQQEIEAADTEPFAAWLAKHA.

It belongs to the glutamate--cysteine ligase type 1 family. Type 1 subfamily.

It carries out the reaction L-cysteine + L-glutamate + ATP = gamma-L-glutamyl-L-cysteine + ADP + phosphate + H(+). The protein operates within sulfur metabolism; glutathione biosynthesis; glutathione from L-cysteine and L-glutamate: step 1/2. The sequence is that of Glutamate--cysteine ligase from Salmonella typhi.